Reading from the N-terminus, the 364-residue chain is tRNA 2-selenouridine synthase (364 aa).

The region spanning 14–137 (LIADTPIIDV…LRQAAIQATI (124 aa)) is the Rhodanese domain. Residue cysteine 97 is the S-selanylcysteine intermediate of the active site.

Belongs to the SelU family. As to quaternary structure, monomer.

The enzyme catalyses 5-methylaminomethyl-2-thiouridine(34) in tRNA + selenophosphate + (2E)-geranyl diphosphate + H2O + H(+) = 5-methylaminomethyl-2-selenouridine(34) in tRNA + (2E)-thiogeraniol + phosphate + diphosphate. It carries out the reaction 5-methylaminomethyl-2-thiouridine(34) in tRNA + (2E)-geranyl diphosphate = 5-methylaminomethyl-S-(2E)-geranyl-thiouridine(34) in tRNA + diphosphate. It catalyses the reaction 5-methylaminomethyl-S-(2E)-geranyl-thiouridine(34) in tRNA + selenophosphate + H(+) = 5-methylaminomethyl-2-(Se-phospho)selenouridine(34) in tRNA + (2E)-thiogeraniol. The catalysed reaction is 5-methylaminomethyl-2-(Se-phospho)selenouridine(34) in tRNA + H2O = 5-methylaminomethyl-2-selenouridine(34) in tRNA + phosphate. Involved in the post-transcriptional modification of the uridine at the wobble position (U34) of tRNA(Lys), tRNA(Glu) and tRNA(Gln). Catalyzes the conversion of 2-thiouridine (S2U-RNA) to 2-selenouridine (Se2U-RNA). Acts in a two-step process involving geranylation of 2-thiouridine (S2U) to S-geranyl-2-thiouridine (geS2U) and subsequent selenation of the latter derivative to 2-selenouridine (Se2U) in the tRNA chain. The polypeptide is tRNA 2-selenouridine synthase (Shigella sonnei (strain Ss046)).